A 306-amino-acid polypeptide reads, in one-letter code: Methionyl-tRNA formyltransferase (306 aa).

108 to 111 (SLLP) contributes to the (6S)-5,6,7,8-tetrahydrofolate binding site.

The protein belongs to the Fmt family.

The enzyme catalyses L-methionyl-tRNA(fMet) + (6R)-10-formyltetrahydrofolate = N-formyl-L-methionyl-tRNA(fMet) + (6S)-5,6,7,8-tetrahydrofolate + H(+). In terms of biological role, attaches a formyl group to the free amino group of methionyl-tRNA(fMet). The formyl group appears to play a dual role in the initiator identity of N-formylmethionyl-tRNA by promoting its recognition by IF2 and preventing the misappropriation of this tRNA by the elongation apparatus. The sequence is that of Methionyl-tRNA formyltransferase from Arthrobacter sp. (strain FB24).